The following is a 626-amino-acid chain: Chaperone protein DnaK (626 aa).

Residue threonine 175 is modified to Phosphothreonine; by autocatalysis. Residues 586-606 are compositionally biased toward low complexity; sequence GAEGAAAGADGAGASAGSASG. The interval 586–626 is disordered; the sequence is GAEGAAAGADGAGASAGSASGSDDDTVEAEVVDDDDDKDNK. Residues 607–626 show a composition bias toward acidic residues; that stretch reads SDDDTVEAEVVDDDDDKDNK.

The protein belongs to the heat shock protein 70 family.

Functionally, acts as a chaperone. The sequence is that of Chaperone protein DnaK from Bifidobacterium longum (strain DJO10A).